We begin with the raw amino-acid sequence, 813 residues long: Ubiquitin carboxyl-terminal hydrolase 45 (813 aa).

Residues 1–14 are compositionally biased toward basic and acidic residues; that stretch reads MRVKDPSKDLPEKG. Residues 1–27 form a disordered region; sequence MRVKDPSKDLPEKGKRNKRPLLPHDED. The segment at 1 to 62 is interaction with ERCC1; that stretch reads MRVKDPSKDL…AVAESLWSVC (62 aa). Phosphoserine occurs at positions 28 and 29. The segment at 36–153 adopts a UBP-type zinc-finger fold; it reads LTCQHVSYAV…AQIVDFLQKH (118 aa). Residues Cys38, His40, Cys62, Cys65, Cys85, Cys88, Cys93, His101, His105, His114, Cys127, and Cys130 each contribute to the Zn(2+) site. The USP domain maps to 191–812; it reads KGITNLGNTC…QAYLLFYERI (622 aa). Cys200 functions as the Nucleophile in the catalytic mechanism. Composition is skewed to basic and acidic residues over residues 405 to 414 and 450 to 466; these read LQETDQDHNK and WPSE…KNDN. Residues 405 to 552 are disordered; that stretch reads LQETDQDHNK…QAKETHGGEE (148 aa). The segment covering 472 to 488 has biased composition (polar residues); that stretch reads PASTLSTEASLNESLTD. Phosphoserine occurs at positions 507 and 525. Positions 521-533 are enriched in basic and acidic residues; the sequence is SRGDSCGHAEQHP. Catalysis depends on His745, which acts as the Proton acceptor.

The protein belongs to the peptidase C19 family. Interacts with ERCC1. The catalytically active form interacts with SPDL1. In terms of tissue distribution, retina.

The protein resides in the photoreceptor inner segment. It is found in the cytoplasm. Its subcellular location is the nucleus. The enzyme catalyses Thiol-dependent hydrolysis of ester, thioester, amide, peptide and isopeptide bonds formed by the C-terminal Gly of ubiquitin (a 76-residue protein attached to proteins as an intracellular targeting signal).. Functionally, catalyzes the deubiquitination of SPDL1. Plays a role in the repair of UV-induced DNA damage via deubiquitination of ERCC1, promoting its recruitment to DNA damage sites. May be involved in the maintenance of photoreceptor function. May play a role in normal retinal development. Plays a role in cell migration. This is Ubiquitin carboxyl-terminal hydrolase 45 (Usp45) from Mus musculus (Mouse).